A 503-amino-acid polypeptide reads, in one-letter code: 4-trimethylaminobutyraldehyde dehydrogenase (503 aa).

NAD(+) is bound by residues Lys189 and 241 to 245; that span reads GSVPT. The active-site Proton acceptor is the Glu263. Cys297 functions as the Nucleophile in the catalytic mechanism. Residue Glu400 participates in NAD(+) binding.

This sequence belongs to the aldehyde dehydrogenase family. Homotetramer.

The protein resides in the cytoplasm. It localises to the cytosol. It catalyses the reaction 4-(trimethylamino)butanal + NAD(+) + H2O = 4-(trimethylamino)butanoate + NADH + 2 H(+). It carries out the reaction an aldehyde + NAD(+) + H2O = a carboxylate + NADH + 2 H(+). Its pathway is amine and polyamine biosynthesis; carnitine biosynthesis. Functionally, converts gamma-trimethylaminobutyraldehyde into gamma-butyrobetaine with high efficiency (in vitro). Can catalyze the irreversible oxidation of a broad range of aldehydes to the corresponding acids in an NAD-dependent reaction, but with low efficiency. The sequence is that of 4-trimethylaminobutyraldehyde dehydrogenase (aldh9A1) from Gadus morhua subsp. callarias (Baltic cod).